A 308-amino-acid chain; its full sequence is Probable 5-dehydro-4-deoxyglucarate dehydratase (308 aa).

Belongs to the DapA family.

The catalysed reaction is 5-dehydro-4-deoxy-D-glucarate + H(+) = 2,5-dioxopentanoate + CO2 + H2O. Its pathway is carbohydrate acid metabolism; D-glucarate degradation; 2,5-dioxopentanoate from D-glucarate: step 2/2. This chain is Probable 5-dehydro-4-deoxyglucarate dehydratase, found in Oceanobacillus iheyensis (strain DSM 14371 / CIP 107618 / JCM 11309 / KCTC 3954 / HTE831).